A 252-amino-acid polypeptide reads, in one-letter code: uncharacterized protein (252 aa).

It belongs to the methyltransferase superfamily.

This is an uncharacterized protein from Mycobacterium sp. (strain KMS).